Reading from the N-terminus, the 552-residue chain is Lysine--tRNA ligase (552 aa).

The 'HIGH' region motif lies at 72 to 80 (PSGLPHLGT). The 'KMSKS' region motif lies at 320 to 324 (KISKS). An ATP-binding site is contributed by lysine 323.

Belongs to the class-I aminoacyl-tRNA synthetase family.

It localises to the cytoplasm. The catalysed reaction is tRNA(Lys) + L-lysine + ATP = L-lysyl-tRNA(Lys) + AMP + diphosphate. The sequence is that of Lysine--tRNA ligase from Caulobacter vibrioides (strain ATCC 19089 / CIP 103742 / CB 15) (Caulobacter crescentus).